A 493-amino-acid polypeptide reads, in one-letter code: Galactose-1-phosphate uridylyltransferase (493 aa).

It belongs to the galactose-1-phosphate uridylyltransferase type 2 family.

The protein resides in the cytoplasm. The catalysed reaction is alpha-D-galactose 1-phosphate + UDP-alpha-D-glucose = alpha-D-glucose 1-phosphate + UDP-alpha-D-galactose. It participates in carbohydrate metabolism; galactose metabolism. In Streptococcus pneumoniae (strain CGSP14), this protein is Galactose-1-phosphate uridylyltransferase.